The primary structure comprises 349 residues: Microfibril-associated glycoprotein 3 (349 aa).

An N-terminal signal peptide occupies residues 1–21 (MKLHHCLSFLLVVTLVPAALS). The Extracellular segment spans residues 22-139 (LEDVAPLGAN…TLRVIFTSGD (118 aa)). N-linked (GlcNAc...) asparagine glycans are attached at residues Asn31, Asn36, Asn63, and Asn103. In terms of domain architecture, Ig-like C2-type spans 41 to 130 (PSFELSAGSY…SPARASYSVT (90 aa)). The cysteines at positions 68 and 117 are disulfide-linked. The chain crosses the membrane as a helical span at residues 140–160 (MSVYYMVVCLIAFTITLILNV). At 161 to 349 (TRLCLMSTHL…EGSIHHRVSI (189 aa)) the chain is on the cytoplasmic side. The tract at residues 280–349 (NPELGRSNSP…EGSIHHRVSI (70 aa)) is disordered. Residues 311-331 (VHLQSETKSIGTDSQDSSHFS) show a composition bias toward polar residues.

Post-translationally, glycosylated.

The protein resides in the cell membrane. Its function is as follows. Component of the elastin-associated microfibrils. The sequence is that of Microfibril-associated glycoprotein 3 (Mfap3) from Mus musculus (Mouse).